Reading from the N-terminus, the 591-residue chain is ATPase family AAA domain-containing protein 3A (591 aa).

The interval 1 to 52 (MSWLFGIKGPKGEGTGPPLPLPPAQPGAEGGGDRGAGDRPSPKDKWSNFDPT) is disordered. N-acetylserine is present on S2. The tract at residues 2-49 (SWLFGIKGPKGEGTGPPLPLPPAQPGAEGGGDRGAGDRPSPKDKWSNF) is required for interaction with the inner surface of the mitochondrial outer membrane. Residues 2–245 (SWLFGIKGPK…FRAFVTDWDK (244 aa)) are Mitochondrial intermembrane-facing. The segment covering 31–47 (GGDRGAGDRPSPKDKWS) has biased composition (basic and acidic residues). Residues 55 to 216 (ERAAKAAREL…REQIRLKAAE (162 aa)) adopt a coiled-coil conformation. The helical transmembrane segment at 246 to 263 (VTATVAGLTLLAVGVYSA) threads the bilayer. The Mitochondrial matrix portion of the chain corresponds to 264-586 (KNATSVAGRY…DSQTNKPPHP (323 aa)). The interval 289 to 304 (RISVLEALRHPIQVSR) is S100B-binding. 351-358 (GPPGTGKT) lines the ATP pocket. K490 is modified (N6-acetyllysine; alternate). Residue K490 is modified to N6-succinyllysine; alternate. N6-acetyllysine is present on residues K494 and K512. Positions 572-591 (KVERPDSQTNKPPHPSLLSC) are disordered.

Belongs to the AAA ATPase family. Can form homooligomers. Homodimer formation at the N-terminus may be regulated by ATP and is required for the interaction with the inner surface of the mitochondrial outer membrane and correct mitochondrial homeostasis. Interacts with components of the mitochondrial ribosome and with other proteins involved in mitochondrial RNA metabolism. May also interact with protein involved in lipid metabolism, including STARD9. May interact with FAM210A. Interacts with GADD45GIP1. Interacts with S100B in a Ca(+2)- and Zn(+2)-dependent manner; this interaction probably occurs in the cytosol prior to mitochondrial targeting. S100B could assist ATAD3A cytoplasmic processing, preventing aggregation and favoring mitochondrial localization. Interacts with HSP60/HSPD1. Interacts with CLPB. Interacts with EIF2AK3/PERK; ATAD3A and EIF2S1/eIF-2-alpha occupy a common binding site within the cytoplasmic loop of EIF2AK3/PERK, leading to prevent EIF2AK3/PERK association with its substrate EIF2S1/eIF-2-alpha. As to expression, expressed in heart, spleen, kidney, liver and at smaller levels, in lung and muscle (at protein level).

It localises to the mitochondrion inner membrane. The protein resides in the mitochondrion matrix. The protein localises to the mitochondrion nucleoid. It catalyses the reaction ATP + H2O = ADP + phosphate + H(+). In terms of biological role, essential for mitochondrial network organization, mitochondrial metabolism and cell growth at organism and cellular level. May play an important role in mitochondrial protein synthesis. May also participate in mitochondrial DNA replication. May bind to mitochondrial DNA D-loops and contribute to nucleoid stability. Required for enhanced channeling of cholesterol for hormone-dependent steroidogenesis. Involved in mitochondrial-mediated antiviral innate immunity. Required to protect mitochondria from the PERK-mediated unfolded protein response: specifically inhibits the activity of EIF2AK3/PERK at mitochondria-endoplasmic reticulum contact sites, thereby providing a safe haven for mitochondrial protein translation during endoplasmic reticulum stress. Ability to inhibit EIF2AK3/PERK is independent of its ATPase activity. Also involved in the mitochondrial DNA damage response by promoting signaling between damaged genomes and the mitochondrial membrane, leading to activation of the integrated stress response (ISR). This chain is ATPase family AAA domain-containing protein 3A (Atad3a), found in Mus musculus (Mouse).